Reading from the N-terminus, the 112-residue chain is DNA-binding protein PF1087 (112 aa).

It belongs to the PDCD5 family.

This chain is DNA-binding protein PF1087, found in Pyrococcus furiosus (strain ATCC 43587 / DSM 3638 / JCM 8422 / Vc1).